The chain runs to 244 residues: DNA repair protein RecO (244 aa).

The protein belongs to the RecO family.

Involved in DNA repair and RecF pathway recombination. In Polynucleobacter asymbioticus (strain DSM 18221 / CIP 109841 / QLW-P1DMWA-1) (Polynucleobacter necessarius subsp. asymbioticus), this protein is DNA repair protein RecO.